The sequence spans 749 residues: Tryptophan 2-monooxygenase (749 aa).

FMN is bound by residues serine 232, glutamate 252, lysine 260, and arginine 280. Arginine 280 contacts substrate.

It belongs to the tryptophan 2-monooxygenase family. FMN is required as a cofactor.

The enzyme catalyses L-tryptophan + O2 = indole-3-acetamide + CO2 + H2O. It participates in plant hormone metabolism; auxin biosynthesis. The chain is Tryptophan 2-monooxygenase (aux1) from Rhizobium rhizogenes (Agrobacterium rhizogenes).